Reading from the N-terminus, the 564-residue chain is Malignant brain tumor repeat protein 1 (564 aa).

4 MBT repeats span residues 64-176, 205-327, 331-442, and 450-549; these read FTWS…MKWL, RPTE…TKAT, LEHS…LDRL, and FKWE…LRHP.

In terms of assembly, interacts with histone H3 that is trimethylated at 'Lys-9' (H3K9me3).

The polypeptide is Malignant brain tumor repeat protein 1 (mbtr-1) (Caenorhabditis elegans).